Here is a 567-residue protein sequence, read N- to C-terminus: Organic cation transporter-like protein (567 aa).

Over 1-21 (MGYDEAIIHLGDFGRYQKIIY) the chain is Cytoplasmic. The chain crosses the membrane as a helical span at residues 22–42 (FLICLTSIPVAFHKLAGVFLL). Over 43–127 (AKPDFRCALP…TEWNLVCGRD (85 aa)) the chain is Extracellular. N-linked (GlcNAc...) asparagine glycosylation is found at Asn55, Asn67, Asn89, and Asn97. Residues 128 to 148 (FMAATSDSLFMLGVLLGSIVF) form a helical membrane-spanning segment. Over 149–158 (GQLSDKYGRK) the chain is Cytoplasmic. Residues 159 to 179 (PILFASLVIQVLFGVLAGVAP) traverse the membrane as a helical segment. Over 180–189 (EYFTYTFARL) the chain is Extracellular. A helical transmembrane segment spans residues 190 to 210 (MVGATTSGVFLVAYVVAMEMV). Residues 211 to 219 (GPDKRLYAG) are Cytoplasmic-facing. Residues 220-240 (IFVMMFFSVGFMLTAVFAYFV) traverse the membrane as a helical segment. Residues 241-244 (HDWR) lie on the Extracellular side of the membrane. A helical transmembrane segment spans residues 245–265 (WLQIALTLPGLIFMFYYWIIP). Over 266–343 (ESARWLLLKG…LFCYPNLRRK (78 aa)) the chain is Cytoplasmic. Residues 304–326 (LDEGENSEEKAKQKLEDQELDEG) form a disordered region. Residues 310–320 (SEEKAKQKLED) show a composition bias toward basic and acidic residues. The chain crosses the membrane as a helical span at residues 344 to 364 (TLLIFLDWLVTSGVYYGLSWN). Topologically, residues 365–371 (TSNLGGN) are extracellular. A helical transmembrane segment spans residues 372 to 392 (VLLNFVISGAVEIPAYIFLLL). Over 393 to 400 (TLNRWGRR) the chain is Cytoplasmic. A helical transmembrane segment spans residues 401–421 (SILCGCLVMAGLSLLATVIIP). At 422 to 427 (QRMHTL) the chain is on the extracellular side. Residues 428–448 (IVACAMLGKLAITASYGTVYI) traverse the membrane as a helical segment. Topologically, residues 449–462 (FSAEQFPTVVRNVA) are cytoplasmic. The chain crosses the membrane as a helical span at residues 463–483 (LGAASMVARISGMMAPFLNFL). Over 484–489 (ATIWKP) the chain is Extracellular. Residues 490–510 (LPLLICGSLTLVAGLLSLLLP) form a helical membrane-spanning segment. The Cytoplasmic portion of the chain corresponds to 511–567 (ETHNKPMLETIADGERFGKKTKADVYLETGQELRAPEAQPLKGSGETNGSTIANGHK). A disordered region spans residues 546-567 (PEAQPLKGSGETNGSTIANGHK). Polar residues predominate over residues 555–567 (GETNGSTIANGHK).

This sequence belongs to the major facilitator (TC 2.A.1) superfamily. Organic cation transporter (TC 2.A.1.19) family.

The protein resides in the membrane. In terms of biological role, probably transports organic cations. The protein is Organic cation transporter-like protein (Orct2) of Drosophila melanogaster (Fruit fly).